The sequence spans 1448 residues: Murinoglobulin-2 (1448 aa).

The signal sequence occupies residues 1–24 (MWKNREAQLCLFSVLLAFLPSASL). Intrachain disulfides connect Cys-48/Cys-86, Cys-245/Cys-277, and Cys-263/Cys-289. N-linked (GlcNAc...) asparagine glycosylation is present at Asn-55. Asn-295, Asn-315, Asn-387, and Asn-502 each carry an N-linked (GlcNAc...) asparagine glycan. 3 cysteine pairs are disulfide-bonded: Cys-462-Cys-556, Cys-588-Cys-748, and Cys-636-Cys-681. Residues 678–709 (PTYCYDLPKEPPRKDPPRKDPEPKDTVVETIR) are bait region. 2 N-linked (GlcNAc...) asparagine glycosylation sites follow: Asn-751 and Asn-846. 4 cysteine pairs are disulfide-bonded: Cys-824/Cys-860, Cys-898/Cys-1295, Cys-1056/Cys-1101, and Cys-1326/Cys-1441. The isoglutamyl cysteine thioester (Cys-Gln) cross-link spans 949 to 952 (CGEQ). Asn-968 carries N-linked (GlcNAc...) asparagine glycosylation. N-linked (GlcNAc...) asparagine glycans are attached at residues Asn-1114, Asn-1285, and Asn-1398.

The protein belongs to the protease inhibitor I39 (alpha-2-macroglobulin) family. Monomer.

Its subcellular location is the secreted. Functionally, a proteinase activates the inhibitor by specific proteolysis in the bait region, which, by an unknown mechanism leads to reaction at the cysteinyl-glutamyl internal thiol ester site and to a conformational change, whereby the proteinase is trapped and/or covalently bound to the inhibitor. While in the tetrameric proteinase inhibitors steric inhibition is sufficiently strong, monomeric forms need a covalent linkage between the activated glutamyl residue of the original thiol ester and a terminal amino group of a lysine or another nucleophilic group on the proteinase, for inhibition to be effective. This chain is Murinoglobulin-2, found in Rattus norvegicus (Rat).